The sequence spans 61 residues: MSRTSLEVKAQRKPKFSARAYNRCPICGRPRAYLRKFGLCRICFRNMALRGELPGVRKSSW.

Zn(2+) is bound by residues Cys24, Cys27, Cys40, and Cys43.

Belongs to the universal ribosomal protein uS14 family. Zinc-binding uS14 subfamily. As to quaternary structure, part of the 30S ribosomal subunit. Contacts proteins S3 and S10. Zn(2+) is required as a cofactor.

Its function is as follows. Binds 16S rRNA, required for the assembly of 30S particles and may also be responsible for determining the conformation of the 16S rRNA at the A site. This Nitratidesulfovibrio vulgaris (strain ATCC 29579 / DSM 644 / CCUG 34227 / NCIMB 8303 / VKM B-1760 / Hildenborough) (Desulfovibrio vulgaris) protein is Small ribosomal subunit protein uS14.